The sequence spans 434 residues: L-2-hydroxyglutarate dehydrogenase, mitochondrial (434 aa).

The protein belongs to the L2HGDH family. FAD serves as cofactor.

Its subcellular location is the mitochondrion. It catalyses the reaction (S)-2-hydroxyglutarate + A = 2-oxoglutarate + AH2. This chain is L-2-hydroxyglutarate dehydrogenase, mitochondrial, found in Caenorhabditis briggsae.